A 197-amino-acid chain; its full sequence is MSIVIIAVLALSALALTFGAVLGFASIKFKVEGNPIVDQIDGLLPQTQCGQCGYPGCRPYAEAIANGDAINKCPPGGEATITALADLLDVEAVPLDSEHGESKGKQVAYIREDECIGCTKCIQACPVDAILGAAKQMHTVIVSECTGCDLCVEPCPVDCIDMIPAPSGIRDWAWDMPKPPVSSGAIIATDQNNGMAA.

The tract at residues 1 to 26 (MSIVIIAVLALSALALTFGAVLGFAS) is hydrophobic. Positions 32–90 (EGNPIVDQIDGLLPQTQCGQCGYPGCRPYAEAIANGDAINKCPPGGEATITALADLLDV) constitute a 4Fe-4S domain. [4Fe-4S] cluster is bound by residues Cys-49, Cys-52, Cys-57, Cys-73, Cys-115, Cys-118, Cys-121, Cys-125, Cys-145, Cys-148, Cys-151, and Cys-155. 4Fe-4S ferredoxin-type domains follow at residues 106–135 (QVAY…GAAK) and 136–165 (QMHT…MIPA).

It belongs to the 4Fe4S bacterial-type ferredoxin family. RnfB subfamily. As to quaternary structure, the complex is composed of six subunits: RnfA, RnfB, RnfC, RnfD, RnfE and RnfG. It depends on [4Fe-4S] cluster as a cofactor.

It localises to the cell inner membrane. In terms of biological role, part of a membrane-bound complex that couples electron transfer with translocation of ions across the membrane. The protein is Ion-translocating oxidoreductase complex subunit B of Hahella chejuensis (strain KCTC 2396).